The primary structure comprises 117 residues: Ribosomal silencing factor RsfS (117 aa).

Belongs to the Iojap/RsfS family. Interacts with ribosomal protein uL14 (rplN).

Its subcellular location is the cytoplasm. Functions as a ribosomal silencing factor. Interacts with ribosomal protein uL14 (rplN), blocking formation of intersubunit bridge B8. Prevents association of the 30S and 50S ribosomal subunits and the formation of functional ribosomes, thus repressing translation. This Halalkalibacterium halodurans (strain ATCC BAA-125 / DSM 18197 / FERM 7344 / JCM 9153 / C-125) (Bacillus halodurans) protein is Ribosomal silencing factor RsfS.